The chain runs to 147 residues: Large ribosomal subunit protein uL16 (147 aa).

The protein belongs to the universal ribosomal protein uL16 family. In terms of assembly, part of the 50S ribosomal subunit.

Functionally, binds 23S rRNA and is also seen to make contacts with the A and possibly P site tRNAs. This chain is Large ribosomal subunit protein uL16, found in Finegoldia magna (strain ATCC 29328 / DSM 20472 / WAL 2508) (Peptostreptococcus magnus).